The sequence spans 284 residues: MASENQKLSSVALTPVEATDYAENTATYKANKRPFLSFMSGISAGACIALAFVFYTTTQTASAGAPWGLTKLVGGLVFSLGVIMVVILGSELFTSSTLTLVARVGGRITTTQMIRNWIVVYLGNFVGGLFIAAVIWFSGQTMAANGQWGLTILATAQHKIHHTWFEAFNLGILCNIMVCVAVWMSYSGKTVTDKAFIMIMPIGLFVASGFEHCVANMFMIPMGIITAHFSTPEFWQQIGVDPMKYADLDLYHFIVKNLIPVTLGNIVGGAICIGVFQRYLTKTH.

Topologically, residues 1 to 34 are cytoplasmic; that stretch reads MASENQKLSSVALTPVEATDYAENTATYKANKRP. Residues 35-55 traverse the membrane as a helical segment; it reads FLSFMSGISAGACIALAFVFY. Residues 56-72 are Periplasmic-facing; it reads TTTQTASAGAPWGLTKL. The helical transmembrane segment at 73–93 threads the bilayer; the sequence is VGGLVFSLGVIMVVILGSELF. The Cytoplasmic portion of the chain corresponds to 94 to 116; the sequence is TSSTLTLVARVGGRITTTQMIRN. A helical membrane pass occupies residues 117–137; the sequence is WIVVYLGNFVGGLFIAAVIWF. Topologically, residues 138–163 are periplasmic; the sequence is SGQTMAANGQWGLTILATAQHKIHHT. Residues 164-184 form a helical membrane-spanning segment; that stretch reads WFEAFNLGILCNIMVCVAVWM. Residues 185–194 are Cytoplasmic-facing; sequence SYSGKTVTDK. Residues 195 to 215 form a helical membrane-spanning segment; it reads AFIMIMPIGLFVASGFEHCVA. At 216-252 the chain is on the periplasmic side; that stretch reads NMFMIPMGIITAHFSTPEFWQQIGVDPMKYADLDLYH. A helical transmembrane segment spans residues 253-273; the sequence is FIVKNLIPVTLGNIVGGAICI. Over 274-284 the chain is Cytoplasmic; it reads GVFQRYLTKTH.

Belongs to the FNT transporter (TC 1.A.16) family. Homopentamer.

It is found in the cell inner membrane. The enzyme catalyses formate(in) = formate(out). Involved in the bidirectional transport of formate during mixed-acid fermentation. Functions to maintain relatively constant intracellular formate levels during growth, using different mechanisms for efflux and uptake of the anion. The sequence is that of Formate channel FocA (focA) from Haemophilus influenzae (strain ATCC 51907 / DSM 11121 / KW20 / Rd).